The primary structure comprises 1288 residues: Photoreceptor cilium actin regulator (1288 aa).

G2 carries the N-myristoyl glycine lipid modification. C3 carries S-palmitoyl cysteine lipidation. Disordered stretches follow at residues 78–147 (MGDP…KWKR), 368–401 (QTSW…QQSP), 423–453 (QPRA…LGTS), 467–527 (PHLS…PFQA), 563–605 (DWSE…SHVE), 686–707 (QKCN…NAIP), 813–1109 (AAKS…EDSQ), 1132–1169 (EAKP…SSGP), and 1190–1288 (LRRT…EEVS). Polar residues-rich tracts occupy residues 96–109 (TKTS…SQSH), 382–401 (SVTS…QQSP), and 434–453 (CLSS…LGTS). A compositionally biased stretch (acidic residues) spans 483 to 495 (DSEDSSPEEEEED). Composition is skewed to polar residues over residues 848 to 857 (SPESSKSTEN), 894 to 904 (SKSTASLTKPH), 927 to 946 (PPAT…QAEK), and 966 to 976 (PSGQNRTSESS). A compositionally biased stretch (low complexity) spans 1018-1028 (PAQPSPSAVQT). Composition is skewed to pro residues over residues 1051–1063 (PHQP…PPES) and 1071–1094 (PSPP…PPMS). Residues 1097–1106 (QEHKETRDSE) show a composition bias toward basic and acidic residues. The span at 1209–1226 (DPTSTSYESQLGQNSSSE) shows a compositional bias: polar residues. The segment covering 1268–1277 (RTGHIQDKSQ) has biased composition (basic and acidic residues). The span at 1278–1288 (PEAQPQQEEVS) shows a compositional bias: polar residues.

In terms of tissue distribution, specifically expressed in retina.

Its subcellular location is the cell projection. It localises to the cilium. It is found in the photoreceptor outer segment. The protein resides in the photoreceptor inner segment. Functionally, plays an essential role for normal photoreceptor cell maintenance and vision. This is Photoreceptor cilium actin regulator from Homo sapiens (Human).